The chain runs to 1449 residues: Gag-Pol polyprotein (1449 aa).

G2 carries the N-myristoyl glycine; by host lipid modification. A Nuclear export signal motif is present at residues L16–R22. Residues K26–K32 carry the Nuclear localization signal motif. 2 CCHC-type zinc fingers span residues I392–A409 and Q413–E430. Residues G442–G494 are disordered. Over residues A457–S470 the composition is skewed to polar residues. Over residues E472–E487 the composition is skewed to basic and acidic residues. The region spanning V518–L587 is the Peptidase A2 domain. The active-site For protease activity; shared with dimeric partner is D523. Residues D641–L831 form the Reverse transcriptase domain. 3 residues coordinate Mg(2+): D707, D782, and D783. Residues F824 to W832 form an RT 'primer grip' region. The Tryptophan repeat motif signature appears at W994–W1010. The RNase H type-1 domain occupies I1030 to R1153. The Mg(2+) site is built by D1039, E1074, D1094, and D1145. The Integrase-type zinc finger occupies E1159 to H1200. Positions 1168, 1172, 1196, and 1199 each coordinate Zn(2+). One can recognise an Integrase catalytic domain in the interval V1210–I1360. Positions 1220 and 1272 each coordinate Mg(2+). Residues F1379–D1426 constitute a DNA-binding region (integrase-type).

Homotrimer. Interacts with gp41 (via C-terminus). In terms of assembly, homodimer. The active site consists of two apposed aspartic acid residues. As to quaternary structure, heterodimer of p66 RT and p51 RT (RT p66/p51). Heterodimerization of RT is essential for DNA polymerase activity. Despite the sequence identities, p66 RT and p51 RT have distinct folding. Homotetramer; may further associate as a homohexadecamer. Requires Mg(2+) as cofactor. Specific enzymatic cleavages by the viral protease yield mature proteins. The protease is released by autocatalytic cleavage. The polyprotein is cleaved during and after budding, this process is termed maturation. Proteolytic cleavage of p66 RT removes the RNase H domain to yield the p51 RT subunit. In terms of processing, capsid protein p24 is phosphorylated.

It is found in the virion. The protein resides in the host nucleus. It localises to the host cytoplasm. The protein localises to the host cell membrane. It catalyses the reaction Specific for a P1 residue that is hydrophobic, and P1' variable, but often Pro.. The catalysed reaction is Endohydrolysis of RNA in RNA/DNA hybrids. Three different cleavage modes: 1. sequence-specific internal cleavage of RNA. Human immunodeficiency virus type 1 and Moloney murine leukemia virus enzymes prefer to cleave the RNA strand one nucleotide away from the RNA-DNA junction. 2. RNA 5'-end directed cleavage 13-19 nucleotides from the RNA end. 3. DNA 3'-end directed cleavage 15-20 nucleotides away from the primer terminus.. The enzyme catalyses 3'-end directed exonucleolytic cleavage of viral RNA-DNA hybrid.. It carries out the reaction DNA(n) + a 2'-deoxyribonucleoside 5'-triphosphate = DNA(n+1) + diphosphate. Its activity is regulated as follows. The viral protease is inhibited by many synthetic protease inhibitors (PIs), such as amprenavir, atazanavir, indinavir, loprinavir, nelfinavir, ritonavir and saquinavir. RT can be inhibited either by nucleoside RT inhibitors (NRTIs) or by non nucleoside RT inhibitors (NNRTIs). NRTIs act as chain terminators, whereas NNRTIs inhibit DNA polymerization by binding a small hydrophobic pocket near the RT active site and inducing an allosteric change in this region. Classical NRTIs are abacavir, adefovir (PMEA), didanosine (ddI), lamivudine (3TC), stavudine (d4T), tenofovir (PMPA), zalcitabine (ddC), and zidovudine (AZT). Classical NNRTIs are atevirdine (BHAP U-87201E), delavirdine, efavirenz (DMP-266), emivirine (I-EBU), and nevirapine (BI-RG-587). The tritherapies used as a basic effective treatment of AIDS associate two NRTIs and one NNRTI. Use of protease inhibitors in tritherapy regimens permit more ambitious therapeutic strategies. Gag-Pol polyprotein and Gag polyprotein may regulate their own translation, by the binding genomic RNA in the 5'-UTR. At low concentration, Gag-Pol and Gag would promote translation, whereas at high concentration, the polyproteins encapsidate genomic RNA and then shut off translation. In terms of biological role, matrix protein p17 has two main functions: in infected cell, it targets Gag and Gag-pol polyproteins to the plasma membrane via a multipartite membrane-binding signal, that includes its myristointegration complex. The myristoylation signal and the NLS exert conflicting influences its subcellular localization. The key regulation of these motifs might be phosphorylation of a portion of MA molecules on the C-terminal tyrosine at the time of virus maturation, by virion-associated cellular tyrosine kinase. Implicated in the release from host cell mediated by Vpu. Functionally, capsid protein p24 forms the conical core that encapsulates the genomic RNA-nucleocapsid complex in the virion. The core is constituted by capsid protein hexamer subunits. The core is disassembled soon after virion entry. Interaction with host PPIA/CYPA protects the virus from restriction by host TRIM5-alpha and from an unknown antiviral activity in host cells. This capsid restriction by TRIM5 is one of the factors which restricts SIV to the simian species. Its function is as follows. Nucleocapsid protein p7 encapsulates and protects viral dimeric unspliced (genomic) RNA. Binds these RNAs through its zinc fingers. Facilitates rearangement of nucleic acid secondary structure during retrotranscription of genomic RNA. This capability is referred to as nucleic acid chaperone activity. The aspartyl protease mediates proteolytic cleavages of Gag and Gag-Pol polyproteins during or shortly after the release of the virion from the plasma membrane. Cleavages take place as an ordered, step-wise cascade to yield mature proteins. This process is called maturation. Displays maximal activity during the budding process just prior to particle release from the cell. Also cleaves Nef and Vif, probably concomitantly with viral structural proteins on maturation of virus particles. Hydrolyzes host EIF4GI and PABP1 in order to shut off the capped cellular mRNA translation. The resulting inhibition of cellular protein synthesis serves to ensure maximal viral gene expression and to evade host immune response. In terms of biological role, reverse transcriptase/ribonuclease H (RT) is a multifunctional enzyme that converts the viral dimeric RNA genome into dsDNA in the cytoplasm, shortly after virus entry into the cell. This enzyme displays a DNA polymerase activity that can copy either DNA or RNA templates, and a ribonuclease H (RNase H) activity that cleaves the RNA strand of RNA-DNA heteroduplexes in a partially processive 3' to 5' endonucleasic mode. Conversion of viral genomic RNA into dsDNA requires many steps. A tRNA binds to the primer-binding site (PBS) situated at the 5'-end of the viral RNA. RT uses the 3' end of the tRNA primer to perform a short round of RNA-dependent minus-strand DNA synthesis. The reading proceeds through the U5 region and ends after the repeated (R) region which is present at both ends of viral RNA. The portion of the RNA-DNA heteroduplex is digested by the RNase H, resulting in a ssDNA product attached to the tRNA primer. This ssDNA/tRNA hybridizes with the identical R region situated at the 3' end of viral RNA. This template exchange, known as minus-strand DNA strong stop transfer, can be either intra- or intermolecular. RT uses the 3' end of this newly synthesized short ssDNA to perform the RNA-dependent minus-strand DNA synthesis of the whole template. RNase H digests the RNA template except for two polypurine tracts (PPTs) situated at the 5'-end and near the center of the genome. It is not clear if both polymerase and RNase H activities are simultaneous. RNase H can probably proceed both in a polymerase-dependent (RNA cut into small fragments by the same RT performing DNA synthesis) and a polymerase-independent mode (cleavage of remaining RNA fragments by free RTs). Secondly, RT performs DNA-directed plus-strand DNA synthesis using the PPTs that have not been removed by RNase H as primers. PPTs and tRNA primers are then removed by RNase H. The 3' and 5' ssDNA PBS regions hybridize to form a circular dsDNA intermediate. Strand displacement synthesis by RT to the PBS and PPT ends produces a blunt ended, linear dsDNA copy of the viral genome that includes long terminal repeats (LTRs) at both ends. Functionally, integrase catalyzes viral DNA integration into the host chromosome, by performing a series of DNA cutting and joining reactions. This enzyme activity takes place after virion entry into a cell and reverse transcription of the RNA genome in dsDNA. The first step in the integration process is 3' processing. This step requires a complex comprising the viral genome, matrix protein, Vpr and integrase. This complex is called the pre-integration complex (PIC). The integrase protein removes 2 nucleotides from each 3' end of the viral DNA, leaving recessed CA OH's at the 3' ends. In the second step, the PIC enters cell nucleus. This process is mediated through integrase and Vpr proteins, and allows the virus to infect a non dividing cell. This ability to enter the nucleus is specific of lentiviruses, other retroviruses cannot and rely on cell division to access cell chromosomes. In the third step, termed strand transfer, the integrase protein joins the previously processed 3' ends to the 5' ends of strands of target cellular DNA at the site of integration. The 5'-ends are produced by integrase-catalyzed staggered cuts, 5 bp apart. A Y-shaped, gapped, recombination intermediate results, with the 5'-ends of the viral DNA strands and the 3' ends of target DNA strands remaining unjoined, flanking a gap of 5 bp. The last step is viral DNA integration into host chromosome. This involves host DNA repair synthesis in which the 5 bp gaps between the unjoined strands are filled in and then ligated. Since this process occurs at both cuts flanking the SIV genome, a 5 bp duplication of host DNA is produced at the ends of SIV integration. Alternatively, Integrase may catalyze the excision of viral DNA just after strand transfer, this is termed disintegration. The chain is Gag-Pol polyprotein (gag-pol) from Cercopithecidae (Old World monkeys).